We begin with the raw amino-acid sequence, 126 residues long: Methylglyoxal synthase (126 aa).

One can recognise an MGS-like domain in the interval 1 to 126 (MEKKIALIAH…LIKGLESLIF (126 aa)). Residues His-10, Lys-14, 36–39 (TGTT), and 56–57 (SG) each bind substrate. Asp-62 serves as the catalytic Proton donor/acceptor. His-89 is a binding site for substrate.

Belongs to the methylglyoxal synthase family.

It catalyses the reaction dihydroxyacetone phosphate = methylglyoxal + phosphate. Its function is as follows. Catalyzes the formation of methylglyoxal from dihydroxyacetone phosphate. The protein is Methylglyoxal synthase of Borreliella burgdorferi (strain ATCC 35210 / DSM 4680 / CIP 102532 / B31) (Borrelia burgdorferi).